The chain runs to 674 residues: Inorganic pyrophosphatase TTM2 (674 aa).

Positions Ser-248–Leu-410 constitute a CYTH domain. Disordered regions lie at residues Lys-457 to Asn-498 and Arg-619 to Ser-640. Positions Ser-484–Pro-496 are enriched in basic and acidic residues. A compositionally biased stretch (low complexity) spans Ala-623–Ser-640. Residues Leu-650–Ile-670 form a helical membrane-spanning segment.

Mg(2+) serves as cofactor. In terms of tissue distribution, predominantly expressed in the shoot apices of inflorescences.

The protein localises to the mitochondrion outer membrane. It carries out the reaction diphosphate + H2O = 2 phosphate + H(+). Exhibits pyrophosphatase activity with stronger affinity for pyrophosphate (PPi), moderate affinity for ATP and ADP, and weak affinity for tripolyphosphate (PPPi). No activity observed toward uridine substrate. Negative regulator of the salicylic acid (SA)-mediated amplification of defense responses against both virulent and avirulent pathogens, including oomycetes (e.g. H.arabidopsidis) and bacteria (e.g. P.syringae). Represses systemic acquired resistance (SAR). The polypeptide is Inorganic pyrophosphatase TTM2 (Arabidopsis thaliana (Mouse-ear cress)).